The chain runs to 321 residues: Polyprenyl transferase cle5 (321 aa).

9 helical membrane passes run 26–46 (PLLA…HKIT), 57–77 (VLSQ…AGMV), 107–127 (EALV…SWML), 132–149 (VQAA…YPFA), 159–179 (IYPQ…GTLA), 189–209 (LWAS…WTLY), 232–252 (VLAG…VLGA), 262–282 (SQWL…GQLV), and 300–320 (FALG…GGNG).

The protein belongs to the UbiA prenyltransferase family. Mg(2+) serves as cofactor.

Its subcellular location is the membrane. Its pathway is secondary metabolite biosynthesis; terpenoid biosynthesis. Its function is as follows. Polyprenyl transferase; part of the cluster A that mediates the biosynthesis of chevalone E and its oxidized derivatives that possess a unique five-membered lactone ring and can synergistically enhance the cytotoxicity of doxorubicin (DOX) in breast cancer cells. Within the pathway, cle5 takes part to the biosynthesis of the molecular scaffold by catalyzing the C-3 geranylgeranylation reaction of triacetic acid lactone (TAL) produced by cle1. The molecular scaffold is commonly biosynthesized by a series of enzymes including the non-reducing polyketide synthase (NR-PKS) cle1 that produces the alpha-pyrone triacetic acid lactone (TAL); The membrane-bound prenyltransferase cle5 that accepts TAL as its substrate to perform a C-3 geranylgeranylation reaction, in which the pathway-dedicated GGPS cle6 is required to provide GGPP, the other substrate of cle5; the FAD-dependent monooxygenase Cle3 that forms an (S)-epoxide ring at the terminal olefin of the geranylgeranyl group; and the terpene cyclase Cle7 that catalyzes the cyclization of the prenyl group that yields the pentacyclic pathway intermediate chevalone E. Chevalone E can derivatize into seven new oxidized analogs by the cytochrome P450 monooxygenases cle2 (acting at C-20) and cle4 (acting at C-11 and C-12). This Aspergillus versicolor protein is Polyprenyl transferase cle5.